Reading from the N-terminus, the 364-residue chain is Dihydroorotate dehydrogenase (quinone) (364 aa).

FMN contacts are provided by residues 61-65 (AGYDK) and Thr-85. Lys-65 lines the substrate pocket. 110-114 (NRLGF) contacts substrate. FMN contacts are provided by Asn-139 and Asn-170. Asn-170 contacts substrate. Catalysis depends on Ser-173, which acts as the Nucleophile. Residue Asn-175 coordinates substrate. Positions 215 and 243 each coordinate FMN. Residue 244–245 (NT) participates in substrate binding. FMN contacts are provided by residues Gly-266, Gly-295, and 316–317 (YS).

The protein belongs to the dihydroorotate dehydrogenase family. Type 2 subfamily. Monomer. Requires FMN as cofactor.

It localises to the cell membrane. The enzyme catalyses (S)-dihydroorotate + a quinone = orotate + a quinol. It participates in pyrimidine metabolism; UMP biosynthesis via de novo pathway; orotate from (S)-dihydroorotate (quinone route): step 1/1. In terms of biological role, catalyzes the conversion of dihydroorotate to orotate with quinone as electron acceptor. The sequence is that of Dihydroorotate dehydrogenase (quinone) from Brucella melitensis biotype 2 (strain ATCC 23457).